Here is a 198-residue protein sequence, read N- to C-terminus: Photosystem I assembly protein Ycf4 (198 aa).

The next 2 helical transmembrane spans lie at 35–57 (WFYNIVMLLGGIGFLIVGISSYI) and 70–92 (IIFFPQGITMCFYGTCGILFSIN).

This sequence belongs to the Ycf4 family.

The protein resides in the plastid. It localises to the chloroplast thylakoid membrane. Its function is as follows. Seems to be required for the assembly of the photosystem I complex. This is Photosystem I assembly protein Ycf4 from Euglena gracilis.